A 740-amino-acid polypeptide reads, in one-letter code: ATP-dependent RNA helicase DDX1 (740 aa).

A necessary for interaction with HNRNPK region spans residues 1–295 (MAAFSEMGVM…APKALIVEPS (295 aa)). Residues 1 to 448 (MAAFSEMGVM…DTVHHVVVPV (448 aa)) are interaction with dsRNA. Residues 1 to 525 (MAAFSEMGVM…KIDCDNLEQY (525 aa)) form a necessary for interaction with RELA region. The 427-residue stretch at 2-428 (AAFSEMGVMP…SEKIMHFPTW (427 aa)) folds into the Helicase ATP-binding domain. Position 46–53 (46–53 (AETGSGKT)) interacts with ATP. Residues 70-247 (DQQEGKKGKT…LKFNFGEEEF (178 aa)) enclose the B30.2/SPRY domain. K239 and K268 each carry N6-acetyllysine. At K281 the chain carries N6-acetyllysine; alternate. K281 is covalently cross-linked (Glycyl lysine isopeptide (Lys-Gly) (interchain with G-Cter in SUMO2); alternate). The DEAD box motif lies at 370–373 (DEAD). The residue at position 481 (S481) is a Phosphoserine. The Helicase C-terminal domain occupies 493–681 (KGEYAVRAIK…QVEPDIKVPV (189 aa)). Residues 525–740 (YFMQQGGGPD…YLPNQLFRTF (216 aa)) are necessary for interaction with HNRNPK.

This sequence belongs to the DEAD box helicase family. DDX1 subfamily. Found in a multi-helicase-TICAM1 complex at least composed of DHX36, DDX1, DDX21 and TICAM1; this complex exists in resting cells with or without poly(I:C) RNA ligand stimulation. Interacts with DHX36. Interacts (via B30.2/SPRY domain) with DDX21 (via N-terminus); this interaction serves as bridges to TICAM1. Interacts with FAM98A (via N- and C-terminus). Interacts with MBNL1. Interacts with CSTF2. Interacts with HNRNPK. Interacts with ATM. Interacts with RELA (via C-terminus). Component of the tRNA-splicing ligase complex. Interacts with PHF5A (via C-terminus). Interacts with PQBP1. Interacts with ERCC6. In terms of processing, phosphorylated by ATM kinase; phosphorylation is increased in response to ionizing radiation (IR). In terms of tissue distribution, testis-specific. Expressed in the germ line stem cells, spermatogonia and spermatocytes of the testis. Also expressed in the seminoma and nonseminoma types of testicular germ cell tumors (TGCTs) (at protein level).

It localises to the nucleus. Its subcellular location is the cytoplasm. It is found in the cytosol. The protein localises to the cytoplasmic granule. The protein resides in the mitochondrion. It carries out the reaction ATP + H2O = ADP + phosphate + H(+). Acts as an ATP-dependent RNA helicase, able to unwind both RNA-RNA and RNA-DNA duplexes. Possesses 5' single-stranded RNA overhang nuclease activity. Possesses ATPase activity on various RNA, but not DNA polynucleotides. May play a role in RNA clearance at DNA double-strand breaks (DSBs), thereby facilitating the template-guided repair of transcriptionally active regions of the genome. Together with RELA, acts as a coactivator to enhance NF-kappa-B-mediated transcriptional activation. Acts as a positive transcriptional regulator of cyclin CCND2 expression. Binds to the cyclin CCND2 promoter region. Associates with chromatin at the NF-kappa-B promoter region via association with RELA. Binds to poly(A) RNA. May be involved in 3'-end cleavage and polyadenylation of pre-mRNAs. Component of the tRNA-splicing ligase complex required to facilitate the enzymatic turnover of catalytic subunit RTCB: together with archease (ZBTB8OS), acts by facilitating the guanylylation of RTCB, a key intermediate step in tRNA ligation. Component of a multi-helicase-TICAM1 complex that acts as a cytoplasmic sensor of viral double-stranded RNA (dsRNA) and plays a role in the activation of a cascade of antiviral responses including the induction of pro-inflammatory cytokines via the adapter molecule TICAM1. Specifically binds (via helicase ATP-binding domain) on both short and long poly(I:C) dsRNA. The chain is ATP-dependent RNA helicase DDX1 (Ddx1) from Mus musculus (Mouse).